A 274-amino-acid chain; its full sequence is uncharacterized protein (274 aa).

The protein resides in the plastid. Its subcellular location is the chloroplast. This is an uncharacterized protein from Euglena gracilis.